The chain runs to 255 residues: MKIDLNSDMGEGFGPYRLCDDEAMMKIVSSANIACGFHGGDPDTMARMVRLAKANGVGIGAHPGLPDRAGFGRREIPFQPDELRQQMLYQLGALMAIAGAEGMKVGHFSFHAAMGNMVNRDPVLADLMMNAIATVDPRLVVFVTPESEIERAAKRAGLKTLALFLADRAYDAEGRLVARGLPGALVKDETSVRARVRRFLTHGQVEAIDGTIIAMPAHSILVHSDTPGSLELARIIRSEIEASGATLAPAAEHAA.

It belongs to the LamB/PxpA family. Forms a complex composed of PxpA, PxpB and PxpC.

It carries out the reaction 5-oxo-L-proline + ATP + 2 H2O = L-glutamate + ADP + phosphate + H(+). Functionally, catalyzes the cleavage of 5-oxoproline to form L-glutamate coupled to the hydrolysis of ATP to ADP and inorganic phosphate. The polypeptide is 5-oxoprolinase subunit A 2 (Agrobacterium fabrum (strain C58 / ATCC 33970) (Agrobacterium tumefaciens (strain C58))).